The primary structure comprises 172 residues: 3-hydroxydecanoyl-[acyl-carrier-protein] dehydratase (172 aa).

His-71 is an active-site residue.

It belongs to the thioester dehydratase family. FabA subfamily. In terms of assembly, homodimer.

The protein localises to the cytoplasm. The catalysed reaction is a (3R)-hydroxyacyl-[ACP] = a (2E)-enoyl-[ACP] + H2O. It carries out the reaction (3R)-hydroxydecanoyl-[ACP] = (2E)-decenoyl-[ACP] + H2O. The enzyme catalyses (2E)-decenoyl-[ACP] = (3Z)-decenoyl-[ACP]. The protein operates within lipid metabolism; fatty acid biosynthesis. In terms of biological role, necessary for the introduction of cis unsaturation into fatty acids. Catalyzes the dehydration of (3R)-3-hydroxydecanoyl-ACP to E-(2)-decenoyl-ACP and then its isomerization to Z-(3)-decenoyl-ACP. Can catalyze the dehydratase reaction for beta-hydroxyacyl-ACPs with saturated chain lengths up to 16:0, being most active on intermediate chain length. In Salmonella arizonae (strain ATCC BAA-731 / CDC346-86 / RSK2980), this protein is 3-hydroxydecanoyl-[acyl-carrier-protein] dehydratase.